A 260-amino-acid polypeptide reads, in one-letter code: Zinc import ATP-binding protein ZnuC (260 aa).

An ABC transporter domain is found at 14–229 (LTARNLCADR…PEFARLFGDQ (216 aa)). Position 46–53 (46–53 (GPNGAGKS)) interacts with ATP.

It belongs to the ABC transporter superfamily. Zinc importer (TC 3.A.1.15.5) family. In terms of assembly, the complex is composed of two ATP-binding proteins (ZnuC), two transmembrane proteins (ZnuB) and a solute-binding protein (ZnuA).

It localises to the cell inner membrane. It catalyses the reaction Zn(2+)(out) + ATP(in) + H2O(in) = Zn(2+)(in) + ADP(in) + phosphate(in) + H(+)(in). Part of the ABC transporter complex ZnuABC involved in zinc import. Responsible for energy coupling to the transport system. The polypeptide is Zinc import ATP-binding protein ZnuC (Magnetococcus marinus (strain ATCC BAA-1437 / JCM 17883 / MC-1)).